Consider the following 225-residue polypeptide: UPF0173 metal-dependent hydrolase PH1671 (225 aa).

This sequence belongs to the UPF0173 family.

This Pyrococcus horikoshii (strain ATCC 700860 / DSM 12428 / JCM 9974 / NBRC 100139 / OT-3) protein is UPF0173 metal-dependent hydrolase PH1671.